A 1496-amino-acid chain; its full sequence is DNA-directed RNA polymerase subunit beta' (1496 aa).

Zn(2+) is bound by residues Cys67, Cys69, Cys82, and Cys85. Asp499, Asp501, and Asp503 together coordinate Mg(2+). Cys867, Cys943, Cys950, and Cys953 together coordinate Zn(2+).

The protein belongs to the RNA polymerase beta' chain family. The RNAP catalytic core consists of 2 alpha, 1 beta, 1 beta' and 1 omega subunit. When a sigma factor is associated with the core the holoenzyme is formed, which can initiate transcription. Mg(2+) is required as a cofactor. The cofactor is Zn(2+).

It catalyses the reaction RNA(n) + a ribonucleoside 5'-triphosphate = RNA(n+1) + diphosphate. In terms of biological role, DNA-dependent RNA polymerase catalyzes the transcription of DNA into RNA using the four ribonucleoside triphosphates as substrates. This is DNA-directed RNA polymerase subunit beta' from Chlorobium limicola (strain DSM 245 / NBRC 103803 / 6330).